The primary structure comprises 236 residues: tRNA (guanine-N(1)-)-methyltransferase (236 aa).

S-adenosyl-L-methionine-binding positions include Gly110 and Leu129–Leu134.

This sequence belongs to the RNA methyltransferase TrmD family. Homodimer.

Its subcellular location is the cytoplasm. It catalyses the reaction guanosine(37) in tRNA + S-adenosyl-L-methionine = N(1)-methylguanosine(37) in tRNA + S-adenosyl-L-homocysteine + H(+). Specifically methylates guanosine-37 in various tRNAs. This is tRNA (guanine-N(1)-)-methyltransferase from Clostridium perfringens (strain ATCC 13124 / DSM 756 / JCM 1290 / NCIMB 6125 / NCTC 8237 / Type A).